The chain runs to 124 residues: S-adenosylmethionine decarboxylase proenzyme (124 aa).

Ser63 (schiff-base intermediate with substrate; via pyruvic acid) is an active-site residue. A Pyruvic acid (Ser); by autocatalysis modification is found at Ser63. Catalysis depends on His68, which acts as the Proton acceptor; for processing activity. Cys83 (proton donor; for catalytic activity) is an active-site residue.

This sequence belongs to the prokaryotic AdoMetDC family. Type 1 subfamily. Heterotetramer of two alpha and two beta chains arranged as a dimer of alpha/beta heterodimers. Requires pyruvate as cofactor. Post-translationally, is synthesized initially as an inactive proenzyme. Formation of the active enzyme involves a self-maturation process in which the active site pyruvoyl group is generated from an internal serine residue via an autocatalytic post-translational modification. Two non-identical subunits are generated from the proenzyme in this reaction, and the pyruvate is formed at the N-terminus of the alpha chain, which is derived from the carboxyl end of the proenzyme. The post-translation cleavage follows an unusual pathway, termed non-hydrolytic serinolysis, in which the side chain hydroxyl group of the serine supplies its oxygen atom to form the C-terminus of the beta chain, while the remainder of the serine residue undergoes an oxidative deamination to produce ammonia and the pyruvoyl group blocking the N-terminus of the alpha chain.

It carries out the reaction S-adenosyl-L-methionine + H(+) = S-adenosyl 3-(methylsulfanyl)propylamine + CO2. It functions in the pathway amine and polyamine biosynthesis; S-adenosylmethioninamine biosynthesis; S-adenosylmethioninamine from S-adenosyl-L-methionine: step 1/1. Functionally, catalyzes the decarboxylation of S-adenosylmethionine to S-adenosylmethioninamine (dcAdoMet), the propylamine donor required for the synthesis of the polyamines spermine and spermidine from the diamine putrescine. The protein is S-adenosylmethionine decarboxylase proenzyme of Acetivibrio thermocellus (strain ATCC 27405 / DSM 1237 / JCM 9322 / NBRC 103400 / NCIMB 10682 / NRRL B-4536 / VPI 7372) (Clostridium thermocellum).